The following is a 465-amino-acid chain: Mitochondrial-processing peptidase subunit beta (465 aa).

His79 contributes to the Zn(2+) binding site. The Proton acceptor role is filled by Glu82. The Zn(2+) site is built by His83 and Glu159.

Belongs to the peptidase M16 family. Heterodimer of an alpha subunit and a beta subunit subunits, forming the mitochondrial processing protease (MPP) in which the alpha subunit is involved in substrate recognition and binding and the beta subunit is the catalytic subunit. Requires Zn(2+) as cofactor.

It is found in the mitochondrion matrix. The catalysed reaction is Release of N-terminal transit peptides from precursor proteins imported into the mitochondrion, typically with Arg in position P2.. Its activity is regulated as follows. Binding to the alpha subunit is required for catalytic activity. In terms of biological role, catalytic subunit of the essential mitochondrial processing protease (MPP), which cleaves the mitochondrial sequence off newly imported precursors proteins. Preferentially, cleaves after an arginine at position P2. This chain is Mitochondrial-processing peptidase subunit beta (MPP1), found in Blastocladiella emersonii (Aquatic fungus).